A 45-amino-acid chain; its full sequence is uncharacterized protein (45 aa).

Residues 2–25 (YQCLRCGGIFNKRREVVEHLLVGH) form a C2H2-type zinc finger.

This is an uncharacterized protein from Sulfolobus spindle-shape virus 1 (SSV1).